The sequence spans 88 residues: UPF0297 protein YrzL (88 aa).

Belongs to the UPF0297 family.

This is UPF0297 protein YrzL (yrzL) from Bacillus subtilis (strain 168).